Reading from the N-terminus, the 872-residue chain is Alanine--tRNA ligase (872 aa).

The Zn(2+) site is built by His-567, His-571, Cys-669, and His-673.

This sequence belongs to the class-II aminoacyl-tRNA synthetase family. Requires Zn(2+) as cofactor.

It localises to the cytoplasm. The enzyme catalyses tRNA(Ala) + L-alanine + ATP = L-alanyl-tRNA(Ala) + AMP + diphosphate. Its function is as follows. Catalyzes the attachment of alanine to tRNA(Ala) in a two-step reaction: alanine is first activated by ATP to form Ala-AMP and then transferred to the acceptor end of tRNA(Ala). Also edits incorrectly charged Ser-tRNA(Ala) and Gly-tRNA(Ala) via its editing domain. The protein is Alanine--tRNA ligase of Streptococcus mutans serotype c (strain ATCC 700610 / UA159).